Reading from the N-terminus, the 87-residue chain is Small ribosomal subunit protein bS20 (87 aa).

The protein belongs to the bacterial ribosomal protein bS20 family.

In terms of biological role, binds directly to 16S ribosomal RNA. The chain is Small ribosomal subunit protein bS20 from Beijerinckia indica subsp. indica (strain ATCC 9039 / DSM 1715 / NCIMB 8712).